Consider the following 353-residue polypeptide: Putrescine N-methyltransferase 2 (353 aa).

The disordered stretch occupies residues Lys-15–Asp-50. Residues His-25–Asp-50 are compositionally biased toward polar residues. Residues Pro-64 to Thr-301 form the PABS domain. S-adenosyl-L-methionine is bound by residues Gln-95, Glu-170, and Asp-201–Gly-202. Catalysis depends on Asp-220, which acts as the Proton acceptor. Tyr-289 contacts S-adenosyl-L-methionine.

It belongs to the class I-like SAM-binding methyltransferase superfamily. Putrescine methyltransferase family. As to expression, predominantly expressed in roots.

It carries out the reaction putrescine + S-adenosyl-L-methionine = N-methylputrescine + S-adenosyl-L-homocysteine + H(+). It functions in the pathway alkaloid biosynthesis; nicotine biosynthesis. In terms of biological role, involved in the biosynthesis of pyridine alkaloid natural products, leading mainly to the production of anabasine, anatabine, nicotine and nornicotine, effective deterrents against herbivores with antiparasitic and pesticide properties (neurotoxins); nornicotine serves as the precursor in the synthesis of the carcinogen compound N'-nitrosonornicotine (NNN). Methyltransferase that mediates the conversion of putrescine to N-methylputrescine. Promotes leaves ripening. This is Putrescine N-methyltransferase 2 from Nicotiana tabacum (Common tobacco).